The sequence spans 366 residues: Box C/D snoRNA protein 1 (366 aa).

Cysteine 5, cysteine 8, cysteine 17, cysteine 20, cysteine 25, cysteine 29, histidine 33, and cysteine 39 together coordinate Zn(2+). The segment at 5–39 (CGVCGIKEFKYKCPRCLVQTCSLECSKKHKTRDNC) adopts an HIT-type zinc-finger fold. The segment at 318–366 (DNAREEEDAEEDSQPTEEPVQKETQDASDSDSDSDDDYNPGLSMDFLTA) is disordered. 2 stretches are compositionally biased toward acidic residues: residues 321-332 (REEEDAEEDSQP) and 343-355 (DASDSDSDSDDDY). Position 330 is a phosphoserine (serine 330).

Belongs to the BCD1 family.

It localises to the nucleus. Its function is as follows. Required for box C/D snoRNAs accumulation involved in snoRNA processing, snoRNA transport to the nucleolus and ribosome biogenesis. This chain is Box C/D snoRNA protein 1 (BCD1), found in Saccharomyces cerevisiae (strain ATCC 204508 / S288c) (Baker's yeast).